Here is a 208-residue protein sequence, read N- to C-terminus: Platelet-activating factor receptor (208 aa).

The Extracellular portion of the chain corresponds to 1 to 16 (MEPHDSSHVDSEFRYT). The chain crosses the membrane as a helical span at residues 17–38 (LFPIVYSIIFVLGVIANGYVLW). Topologically, residues 39–54 (VFARLYPSKKFNEIKI) are cytoplasmic. The helical transmembrane segment at 55 to 74 (FMVNLTMADMLFLITLPLWI) threads the bilayer. The Extracellular portion of the chain corresponds to 75 to 91 (VYYQNGGNWIFPKFLCN). Residues cysteine 90 and cysteine 173 are joined by a disulfide bond. The chain crosses the membrane as a helical span at residues 92-113 (LAGCLFFINTYCSVAFLGVITY). The Cytoplasmic portion of the chain corresponds to 114–133 (NRFQAVTRPIKTAQANTRKR). A helical transmembrane segment spans residues 134–155 (GISLSLVIWVAIVGAASYFFIL). The Extracellular segment spans residues 156 to 184 (DSTNTVPNSAGSGNITRCFEHYEKGSVPV). Asparagine 169 carries an N-linked (GlcNAc...) asparagine glycan. A helical membrane pass occupies residues 185-205 (LIIHIFIVFSFFLVFLIILFC). Residues 206–208 (NLV) lie on the Cytoplasmic side of the membrane.

The protein belongs to the G-protein coupled receptor 1 family. In terms of assembly, interacts with ARRB1.

It is found in the cell membrane. Its function is as follows. Receptor for platelet activating factor, a chemotactic phospholipid mediator that possesses potent inflammatory, smooth-muscle contractile and hypotensive activity. Seems to mediate its action via a G protein that activates a phosphatidylinositol-calcium second messenger system. The protein is Platelet-activating factor receptor (PTAFR) of Macaca mulatta (Rhesus macaque).